The sequence spans 325 residues: UPF0285 protein MmarC5_0962 (325 aa).

It belongs to the UPF0285 family.

The chain is UPF0285 protein MmarC5_0962 from Methanococcus maripaludis (strain C5 / ATCC BAA-1333).